The primary structure comprises 858 residues: Elongation factor 2 (858 aa).

A tr-type G domain is found at 17–362 (ANIRNMSVIA…MITIHLPSPV (346 aa)). 26 to 33 (AHVDHGKS) contributes to the GTP binding site. Threonine 54 carries the post-translational modification Phosphothreonine. Position 57 is a phosphothreonine; by EEF2K (threonine 57). Threonine 59 carries the post-translational modification Phosphothreonine. An N6-succinyllysine modification is found at lysine 152. GTP is bound by residues 158 to 161 (NKMD) and 216 to 218 (SGL). Lysine 235 bears the N6-acetyllysine mark. Position 239 is an N6-acetyllysine; alternate (lysine 239). Lysine 239 is covalently cross-linked (Glycyl lysine isopeptide (Lys-Gly) (interchain with G-Cter in SUMO1); alternate). Phosphotyrosine; by CSK is present on tyrosine 265. Lysine 272 carries the post-translational modification N6-acetyllysine; alternate. An N6-succinyllysine; alternate modification is found at lysine 272. Lysine 275 carries the post-translational modification N6-acetyllysine. Residue lysine 322 forms a Glycyl lysine isopeptide (Lys-Gly) (interchain with G-Cter in SUMO) linkage. Serine 325 carries the post-translational modification Phosphoserine. Tyrosine 373 carries the phosphotyrosine; by CSK modification. Threonine 435 bears the Phosphothreonine mark. An N6-acetyllysine mark is found at lysine 439 and lysine 445. Serine 502 is modified (phosphoserine). Lysine 525 is modified (N6,N6,N6-trimethyllysine; by EEF2KMT). Residue lysine 529 forms a Glycyl lysine isopeptide (Lys-Gly) (interchain with G-Cter in SUMO) linkage. Lysine 572 bears the N6-succinyllysine mark. The residue at position 595 (serine 595) is a Phosphoserine; by CDK2. An N6-acetyllysine modification is found at lysine 619. Histidine 715 is modified (diphthamide).

The protein belongs to the TRAFAC class translation factor GTPase superfamily. Classic translation factor GTPase family. EF-G/EF-2 subfamily. As to quaternary structure, binds to 80S ribosomes. Actively translating ribosomes show mutually exclusive binding of eIF5a (EIF5A or EIF5A2) and EEF2/eEF2. Interacts with SERBP1; interaction sequesters EEF2/eEF2 at the A-site of the ribosome, thereby blocking the interaction sites of the mRNA-tRNA complex, promoting ribosome stabilization and hibernation. Interacts with HABP4; interaction takes place at the A-site of hibernating ribosomes and promotes ribosome stabilization. Component of the mRNA surveillance SURF complex, at least composed of ERF1, ERF3 (ERF3A or ERF3B), EEF2, UPF1/RENT1, SMG1, SMG8 and SMG9. Interacts with RBPMS2. Post-translationally, phosphorylation by EF-2 kinase completely inactivates EF-2; it requires prior phosphorylation by CDK2 at Ser-595 during mitotic prometaphase. Phosphorylation by CSK promotes SUMOylation, proteolytic cleavage, and nuclear translocation if the C-terminal fragment. Diphthamide is 2-[3-carboxyamido-3-(trimethyl-ammonio)propyl]histidine. In terms of processing, ISGylated. Post-translationally, proteolytically processed at two sites following phosphorylation by CSK. SUMOylated following phosphorylation by CSK, promotes proteolytic cleavage.

The protein localises to the cytoplasm. Its subcellular location is the nucleus. It carries out the reaction GTP + H2O = GDP + phosphate + H(+). Its function is as follows. Catalyzes the GTP-dependent ribosomal translocation step during translation elongation. During this step, the ribosome changes from the pre-translocational (PRE) to the post-translocational (POST) state as the newly formed A-site-bound peptidyl-tRNA and P-site-bound deacylated tRNA move to the P and E sites, respectively. Catalyzes the coordinated movement of the two tRNA molecules, the mRNA and conformational changes in the ribosome. The protein is Elongation factor 2 (EEF2) of Pongo abelii (Sumatran orangutan).